Here is a 378-residue protein sequence, read N- to C-terminus: tRNA (guanine(26)-N(2))-dimethyltransferase (378 aa).

Residues 4–374 (KEVTEGKVRI…KGYEEIIRCV (371 aa)) form the Trm1 methyltransferase domain. 5 residues coordinate S-adenosyl-L-methionine: R44, R69, D87, D114, and A115. The Zn(2+) site is built by C246, C249, C263, and C266.

Belongs to the class I-like SAM-binding methyltransferase superfamily. Trm1 family.

It catalyses the reaction guanosine(26) in tRNA + 2 S-adenosyl-L-methionine = N(2)-dimethylguanosine(26) in tRNA + 2 S-adenosyl-L-homocysteine + 2 H(+). Dimethylates a single guanine residue at position 26 of a number of tRNAs using S-adenosyl-L-methionine as donor of the methyl groups. This chain is tRNA (guanine(26)-N(2))-dimethyltransferase, found in Saccharolobus islandicus (strain M.16.27) (Sulfolobus islandicus).